Reading from the N-terminus, the 341-residue chain is Two-component response regulator ORR30 (341 aa).

Residues 12 to 127 (RVLVIDDDCS…ELSNIWQHIF (116 aa)) form the Response regulatory domain. A 4-aspartylphosphate modification is found at Asp63. An HTH myb-type domain is found at 195-254 (DLGKSRLTWTTQLHRQFIAAVNHLGEDKAVPKKILGIMKVKHLTREQVASHLQKYRMQLK). The H-T-H motif DNA-binding region spans 225-250 (PKKILGIMKVKHLTREQVASHLQKYR).

The protein belongs to the ARR family. Type-B subfamily. Two-component system major event consists of a His-to-Asp phosphorelay between a sensor histidine kinase (HK) and a response regulator (RR). In plants, the His-to-Asp phosphorelay involves an additional intermediate named Histidine-containing phosphotransfer protein (HPt). This multistep phosphorelay consists of a His-Asp-His-Asp sequential transfer of a phosphate group between first a His and an Asp of the HK protein, followed by the transfer to a conserved His of the HPt protein and finally the transfer to an Asp in the receiver domain of the RR protein.

It is found in the nucleus. Its function is as follows. Transcriptional activator that acts as a floral inducer to promote short-day (SD) flowering pathway. Activates HD3A and other FT-like genes independently from HD1. May also activate MADS-box transcription factors involved in flowering regulation. Functions as a response regulator involved in His-to-Asp phosphorelay signal transduction system. Phosphorylation of the Asp residue in the receiver domain activates the ability of the protein to promote the transcription of target genes. May directly activate some type-A response regulators in response to cytokinins. The protein is Two-component response regulator ORR30 of Oryza sativa subsp. japonica (Rice).